Here is a 72-residue protein sequence, read N- to C-terminus: Crustacean hyperglycemic hormone A (72 aa).

Gln1 is subject to Pyrrolidone carboxylic acid. Phe3 carries the post-translational modification D-phenylalanine; in form CHHA-II. 3 disulfide bridges follow: Cys7–Cys43, Cys23–Cys39, and Cys26–Cys52. A Valine amide modification is found at Val72.

Post-translationally, stereoinversion of L-Phe (in CHHA-I) to D-Phe (in CHHA-II).

It localises to the secreted. Functionally, hormone found in the sinus gland of isopods and decapods which controls the blood sugar level. Has a secretagogue action over the amylase released from the midgut gland. May act as a stress hormone and may be involved in the control of molting and reproduction. In Cherax destructor (Common yabby crayfish), this protein is Crustacean hyperglycemic hormone A.